The chain runs to 475 residues: Dihydrolipoyl dehydrogenase (475 aa).

FAD contacts are provided by residues 37–46 (EQYYSLGGVC), K55, and A118. An intrachain disulfide couples C46 to C51. NAD(+) contacts are provided by residues 183–187 (GGGII), D206, V239, and 272–275 (AIGR). FAD is bound by residues D315 and A323. H447 acts as the Proton acceptor in catalysis.

It belongs to the class-I pyridine nucleotide-disulfide oxidoreductase family. Homodimer. Requires FAD as cofactor.

The protein localises to the cytoplasm. It carries out the reaction N(6)-[(R)-dihydrolipoyl]-L-lysyl-[protein] + NAD(+) = N(6)-[(R)-lipoyl]-L-lysyl-[protein] + NADH + H(+). Its function is as follows. Lipoamide dehydrogenase is a component of the alpha-ketoacid dehydrogenase complexes. The protein is Dihydrolipoyl dehydrogenase (lpdA) of Buchnera aphidicola subsp. Baizongia pistaciae (strain Bp).